Reading from the N-terminus, the 137-residue chain is Global transcriptional regulator Spx (137 aa).

C10 and C13 are disulfide-bonded.

Belongs to the ArsC family. Spx subfamily. In terms of assembly, interacts with the C-terminal domain of the alpha subunit of the RNAP.

The protein localises to the cytoplasm. Its function is as follows. Global transcriptional regulator that plays a key role in stress response and exerts either positive or negative regulation of genes. Acts by interacting with the C-terminal domain of the alpha subunit of the RNA polymerase (RNAP). This interaction can enhance binding of RNAP to the promoter region of target genes and stimulate their transcription, or block interaction of RNAP with activator. This is Global transcriptional regulator Spx from Streptococcus agalactiae serotype III (strain NEM316).